The following is a 208-amino-acid chain: Small ribosomal subunit protein eS8 (208 aa).

Residues 1 to 27 (MGISRDNWHKRRKTGGKRKPYHKKRKY) form a disordered region. Gly2 carries the N-myristoyl glycine lipid modification. Residues 8-26 (WHKRRKTGGKRKPYHKKRK) are compositionally biased toward basic residues. Lys37 and Lys128 each carry N6-acetyllysine. A Phosphothreonine modification is found at Thr130. The residue at position 160 (Ser160) is a Phosphoserine. Residues Lys170 and Lys193 each participate in a glycyl lysine isopeptide (Lys-Gly) (interchain with G-Cter in SUMO2) cross-link.

This sequence belongs to the eukaryotic ribosomal protein eS8 family. In terms of assembly, component of the small ribosomal subunit. Identified in a IGF2BP1-dependent mRNP granule complex containing untranslated mRNAs. Part of the small subunit (SSU) processome, composed of more than 70 proteins and the RNA chaperone small nucleolar RNA (snoRNA) U3.

The protein localises to the cytoplasm. The protein resides in the membrane. Its subcellular location is the nucleus. It is found in the nucleolus. In terms of biological role, component of the small ribosomal subunit. The ribosome is a large ribonucleoprotein complex responsible for the synthesis of proteins in the cell. Part of the small subunit (SSU) processome, first precursor of the small eukaryotic ribosomal subunit. During the assembly of the SSU processome in the nucleolus, many ribosome biogenesis factors, an RNA chaperone and ribosomal proteins associate with the nascent pre-rRNA and work in concert to generate RNA folding, modifications, rearrangements and cleavage as well as targeted degradation of pre-ribosomal RNA by the RNA exosome. This Oryctolagus cuniculus (Rabbit) protein is Small ribosomal subunit protein eS8 (RPS8).